The primary structure comprises 346 residues: Holliday junction branch migration complex subunit RuvB (346 aa).

A large ATPase domain (RuvB-L) region spans residues 4–184; that stretch reads TDRLIAPTAK…FGIVQRLEFY (181 aa). ATP-binding positions include Arg24, Gly65, Lys68, Thr69, Thr70, 131 to 133, Arg174, Tyr184, and Arg221; that span reads EDF. Mg(2+) is bound at residue Thr69. Positions 185 to 255 are small ATPAse domain (RuvB-S); that stretch reads NVKDLTHIVA…LADKALNMLN (71 aa). A head domain (RuvB-H) region spans residues 258 to 346; that stretch reads ERGFDHMDRR…QESQGGEGIA (89 aa). Residues Arg294, Arg313, and Arg318 each contribute to the DNA site.

The protein belongs to the RuvB family. As to quaternary structure, homohexamer. Forms an RuvA(8)-RuvB(12)-Holliday junction (HJ) complex. HJ DNA is sandwiched between 2 RuvA tetramers; dsDNA enters through RuvA and exits via RuvB. An RuvB hexamer assembles on each DNA strand where it exits the tetramer. Each RuvB hexamer is contacted by two RuvA subunits (via domain III) on 2 adjacent RuvB subunits; this complex drives branch migration. In the full resolvosome a probable DNA-RuvA(4)-RuvB(12)-RuvC(2) complex forms which resolves the HJ.

It localises to the cytoplasm. The catalysed reaction is ATP + H2O = ADP + phosphate + H(+). Its function is as follows. The RuvA-RuvB-RuvC complex processes Holliday junction (HJ) DNA during genetic recombination and DNA repair, while the RuvA-RuvB complex plays an important role in the rescue of blocked DNA replication forks via replication fork reversal (RFR). RuvA specifically binds to HJ cruciform DNA, conferring on it an open structure. The RuvB hexamer acts as an ATP-dependent pump, pulling dsDNA into and through the RuvAB complex. RuvB forms 2 homohexamers on either side of HJ DNA bound by 1 or 2 RuvA tetramers; 4 subunits per hexamer contact DNA at a time. Coordinated motions by a converter formed by DNA-disengaged RuvB subunits stimulates ATP hydrolysis and nucleotide exchange. Immobilization of the converter enables RuvB to convert the ATP-contained energy into a lever motion, pulling 2 nucleotides of DNA out of the RuvA tetramer per ATP hydrolyzed, thus driving DNA branch migration. The RuvB motors rotate together with the DNA substrate, which together with the progressing nucleotide cycle form the mechanistic basis for DNA recombination by continuous HJ branch migration. Branch migration allows RuvC to scan DNA until it finds its consensus sequence, where it cleaves and resolves cruciform DNA. The chain is Holliday junction branch migration complex subunit RuvB from Cellvibrio japonicus (strain Ueda107) (Pseudomonas fluorescens subsp. cellulosa).